We begin with the raw amino-acid sequence, 689 residues long: Dipeptidyl aminopeptidase BIII (689 aa).

The N-terminal stretch at 1-26 is a signal peptide; sequence MRHPAFRLTLLASTVAFALAPQAAQA. Residues serine 506, aspartate 593, and histidine 625 each act as charge relay system in the active site.

It belongs to the peptidase S9C family. As to quaternary structure, monomer.

With respect to regulation, strongly inhibited by the serine protease inhibitor diisopropyl fluorophosphate (DFP), chymostatin, leupeptin, 0.5 mM ZnCl(2), 10 mM o-phenanthlorine and N-tosyl-L-phenyl-alanyl chloromethyl ketone (TPCK), but not by N-tosyl-L-lysyl chloromethyl ketone (TLCK). Activity is not affected significantly by iodoacetate (IAA), L-trans-epoxysuccinyl-leucylamido(4-guanido)butane (E64), pepstatin A and phenylmethanesulfonyl fluoride (PMSF). Activity is stimulated by addition of 0.5 mM CaCl(2), 10 mM EDTA and N-ethylmaleimide (NEM). Exopeptidase that catalyzes the removal of dipeptide units (NH2-P2-P1- or -P1'-P2'-COOH) from the free amino or carboxy termini. Prefers substrates composed of bulky, hydrophobic amino acids at P1 and P1' positions. Has endopeptidase activity on N-terminally blocked peptide derivatives which contain aromatic amino acid residue at the P1 position. Exopeptidase activity is much higher than its endopeptidase activity. The protein is Dipeptidyl aminopeptidase BIII of Pseudoxanthomonas mexicana.